We begin with the raw amino-acid sequence, 501 residues long: Aspartate--tRNA ligase, cytoplasmic (501 aa).

Thr-52 carries the post-translational modification Phosphothreonine. The residue at position 74 (Lys-74) is an N6-acetyllysine. Glu-229 contacts L-aspartate. Ser-249 carries the phosphoserine modification. The tract at residues 251-254 is aspartate; it reads QLYK. Residue Arg-273 coordinates L-aspartate. ATP-binding positions include 273–275 and 281–283; these read RAE and RHL. Lys-374 is subject to N6-acetyllysine. Residues 411 to 415 are binding site for the 3'-end of tRNA; it reads KQSNS. Glu-424 lines the ATP pocket. The L-aspartate site is built by Ser-427 and Arg-431. 472-475 contacts ATP; sequence GLER. Thr-500 carries the phosphothreonine; by PKA modification.

It belongs to the class-II aminoacyl-tRNA synthetase family. Type 2 subfamily. Homodimer. Part of a multisubunit complex that groups tRNA ligases for Arg (RARS1), Asp (DARS1), Gln (QARS1), Ile (IARS1), Leu (LARS1), Lys (KARS1), Met (MARS1) the bifunctional ligase for Glu and Pro (EPRS1) and the auxiliary subunits AIMP1/p43, AIMP2/p38 and EEF1E1/p18.

The protein resides in the cytoplasm. It carries out the reaction tRNA(Asp) + L-aspartate + ATP = L-aspartyl-tRNA(Asp) + AMP + diphosphate. Functionally, catalyzes the specific attachment of an amino acid to its cognate tRNA in a 2 step reaction: the amino acid (AA) is first activated by ATP to form AA-AMP and then transferred to the acceptor end of the tRNA. The chain is Aspartate--tRNA ligase, cytoplasmic (DARS1) from Pongo abelii (Sumatran orangutan).